A 259-amino-acid chain; its full sequence is Envelope biogenesis factor ElyC (259 aa).

2 helical membrane-spanning segments follow: residues 12–32 (MLLP…LLWF) and 39–59 (GKIF…QPVA).

It localises to the cell inner membrane. In terms of biological role, plays a critical role in the metabolism of the essential lipid carrier used for cell wall synthesis. The polypeptide is Envelope biogenesis factor ElyC (elyC) (Escherichia coli O157:H7).